Reading from the N-terminus, the 214-residue chain is MRKRISAIIMTLFMVFMSCNNGGPELKSDEVAKSDGTVLDLAKISAKIKEASAFAASVKEVHTLVKSVDTLAGAIGKKIKSDGKFDAMAGKNGSLLAGAYNVALDINSKLTVLDGKAGLSSLLKAKVTAAKTSGESFSNKLKTEHTDLGKEEASDDNAKAALLVTNATKNKGVTELEALNTAVDALLKAAEGEVEAAIKELTAPVKVEKPSQNN.

A signal peptide spans 1-18 (MRKRISAIIMTLFMVFMS). C19 carries N-palmitoyl cysteine lipidation. C19 carries S-diacylglycerol cysteine lipidation.

Belongs to the variable small protein (Vsp) family.

The protein resides in the cell outer membrane. Its function is as follows. The Vlp and Vsp proteins are antigenically distinct proteins, only one vlp or vsp gene is transcriptionally active at any one time. Switching between these genes is a mechanism of host immune response evasion. This is Variable small protein 1 from Borrelia hermsii.